Here is a 407-residue protein sequence, read N- to C-terminus: 12S rRNA N(4)-cytidine methyltransferase METTL15 (407 aa).

S-adenosyl-L-methionine is bound by residues 100–102 (GGH), aspartate 119, phenylalanine 146, aspartate 169, and glutamine 176. Serine 358 is modified (phosphoserine).

The protein belongs to the methyltransferase superfamily. RsmH family.

The protein localises to the mitochondrion matrix. The enzyme catalyses cytidine(839) in 12S rRNA + S-adenosyl-L-methionine = N(4)-methylcytidine(839) in 12S rRNA + S-adenosyl-L-homocysteine + H(+). In terms of biological role, N4-methylcytidine (m4C) methyltransferase responsible for the methylation of position C839 in mitochondrial 12S rRNA. Involved in the stabilization of 12S rRNA folding, therefore facilitating the assembly of the mitochondrial small ribosomal subunits. The polypeptide is 12S rRNA N(4)-cytidine methyltransferase METTL15 (Homo sapiens (Human)).